We begin with the raw amino-acid sequence, 579 residues long: Nuclear hormone receptor family member nhr-22 (579 aa).

The segment at residues 93 to 173 (SRSCHVCSSP…AGMRRELVQA (81 aa)) is a DNA-binding region (nuclear receptor). NR C4-type zinc fingers lie at residues 96–117 (CHVCSSPTANTLHFGGRSCKAC) and 133–161 (CIGTGDDTNPCRTHYELRMICRHCRFIKC). Over residues 233-242 (LSPDPSSSQP) the composition is skewed to low complexity. Residues 233-256 (LSPDPSSSQPLDMTVTPPPLHRST) are disordered. The NR LBD domain maps to 304–577 (EVENKIFELV…SIMYDLLSFR (274 aa)).

Belongs to the nuclear hormone receptor family.

It localises to the nucleus. Its function is as follows. Orphan nuclear receptor. This chain is Nuclear hormone receptor family member nhr-22 (nhr-22), found in Caenorhabditis elegans.